Here is a 464-residue protein sequence, read N- to C-terminus: Argininosuccinate lyase (464 aa).

Belongs to the lyase 1 family. Argininosuccinate lyase subfamily.

Its subcellular location is the cytoplasm. The enzyme catalyses 2-(N(omega)-L-arginino)succinate = fumarate + L-arginine. Its pathway is amino-acid biosynthesis; L-arginine biosynthesis; L-arginine from L-ornithine and carbamoyl phosphate: step 3/3. This chain is Argininosuccinate lyase, found in Pseudomonas aeruginosa (strain ATCC 15692 / DSM 22644 / CIP 104116 / JCM 14847 / LMG 12228 / 1C / PRS 101 / PAO1).